Reading from the N-terminus, the 232-residue chain is 5'-methylthioadenosine/S-adenosylhomocysteine nucleosidase (232 aa).

Residue E12 is the Proton acceptor of the active site. Substrate-binding positions include G78, M153, and 174-175 (ME). D198 functions as the Proton donor in the catalytic mechanism.

It belongs to the PNP/UDP phosphorylase family. MtnN subfamily.

It carries out the reaction S-adenosyl-L-homocysteine + H2O = S-(5-deoxy-D-ribos-5-yl)-L-homocysteine + adenine. The enzyme catalyses S-methyl-5'-thioadenosine + H2O = 5-(methylsulfanyl)-D-ribose + adenine. It catalyses the reaction 5'-deoxyadenosine + H2O = 5-deoxy-D-ribose + adenine. The protein operates within amino-acid biosynthesis; L-methionine biosynthesis via salvage pathway; S-methyl-5-thio-alpha-D-ribose 1-phosphate from S-methyl-5'-thioadenosine (hydrolase route): step 1/2. Functionally, catalyzes the irreversible cleavage of the glycosidic bond in both 5'-methylthioadenosine (MTA) and S-adenosylhomocysteine (SAH/AdoHcy) to adenine and the corresponding thioribose, 5'-methylthioribose and S-ribosylhomocysteine, respectively. Also cleaves 5'-deoxyadenosine, a toxic by-product of radical S-adenosylmethionine (SAM) enzymes, into 5-deoxyribose and adenine. This is 5'-methylthioadenosine/S-adenosylhomocysteine nucleosidase from Geobacillus sp. (strain WCH70).